Reading from the N-terminus, the 218-residue chain is Small ribosomal subunit protein mS34 (218 aa).

The tract at residues 180 to 218 (KNGDTSTEEPMLNVQRIRMEPWDYPAKQEDKGRAKGTPV) is disordered. Residues 196–212 (IRMEPWDYPAKQEDKGR) are compositionally biased toward basic and acidic residues.

The protein belongs to the mitochondrion-specific ribosomal protein mS34 family. Component of the mitochondrial small ribosomal subunit (mt-SSU). Mature mammalian 55S mitochondrial ribosomes consist of a small (28S) and a large (39S) subunit. The 28S small subunit contains a 12S ribosomal RNA (12S mt-rRNA) and 30 different proteins. The 39S large subunit contains a 16S rRNA (16S mt-rRNA), a copy of mitochondrial valine transfer RNA (mt-tRNA(Val)), which plays an integral structural role, and 52 different proteins.

It localises to the mitochondrion. In terms of biological role, required for mitochondrial translation, plays a role in maintaining the stability of the small ribosomal subunit and the 12S rRNA that are required for mitoribosome formation. This is Small ribosomal subunit protein mS34 (MRPS34) from Homo sapiens (Human).